A 160-amino-acid chain; its full sequence is RTX-II toxin-activating lysine-acyltransferase ApxIIC (160 aa).

Catalysis depends on residues histidine 23 and aspartate 92.

It belongs to the RTX toxin acyltransferase family. Homodimer.

It localises to the cytoplasm. The enzyme catalyses a fatty acyl-[ACP] + L-lysyl-[protein] = N(6)-(fatty acyl)-L-lysyl-[protein] + holo-[ACP] + H(+). Protein-lysine acyltransferase that catalyzes fatty acylation of the protoxin, thereby converting it to the active toxin. This chain is RTX-II toxin-activating lysine-acyltransferase ApxIIC (apxIIC), found in Actinobacillus pleuropneumoniae (Haemophilus pleuropneumoniae).